Here is a 654-residue protein sequence, read N- to C-terminus: Fimbrin-2 (654 aa).

Calponin-homology (CH) domains lie at 124–241, 269–372, 394–500, and 515–623; these read DSEK…KIQL, LPPE…QHRN, SREE…RYNI, and EITD…YWTL. Actin-binding regions lie at residues 124-372 and 394-623; these read DSEK…QHRN and SREE…YWTL.

As to quaternary structure, interacts with F-actin.

Its subcellular location is the cytoplasm. The protein resides in the cytoskeleton. In terms of biological role, cross-links actin filaments (F-actin). Stabilizes and prevents F-actin depolymerization mediated by profilin. May regulate actin cytoarchitecture, cell cycle, cell division, cell elongation and cytoplasmic tractus. This is Fimbrin-2 from Arabidopsis thaliana (Mouse-ear cress).